Here is a 687-residue protein sequence, read N- to C-terminus: MSVRYPLLNRELGILGFNERVLAQAADPQVPLLERLRFICITSSNLDEFFEVRMAGLQEQIRDNPGALTPDGMSLQHAYDLVVERAQRLVHRQYTMLHETVLPALEQEGIYFHAADTWNDEQLEWARRYFLDELLPVLTPIGLDPAHPFPRVLNKSLNFVVELEGRDAFGRQAVMGIVQAPRALPRVVRMPQALSGFEHGFVLLSTFMQRFVGELFPQLVVKSCNQFRITRNSELFVDEDEITNLRVALQGELPARHLGNAVRLEVSADTPAHIVRRLLEESLLDEKDCYRVAGSVNLVRLMQIPDLVDRPDLKFAPFTASIPPVIANAPAMFDAIDDGDILLHHPYESFQPVLELLQQAAKDPSVVAIKQTIYRTGTDSPLMDALMAAARNGKEVTVVVELLARFDEETNINWASQLEAVGAHVVYGVVGHKCHAKMMLIVRRVVESGKATLRRYVHLGTGNYHPRTARLYTDFGLMTADQKICEDVHHVFQQLTGIGGELTLHELWQSPFTLHPRIIESIRAEIDNARAGKRARVVAKMNALLEPTVIAALYEASQAGVKVDLIVRGVCALKPGVPGLSENITVRSIVGRFLEHHRIYYFHADGAEEVYLSSADWMDRNLFRRVEVAFPIRERKLKRRVIAEGLSVCLGDNQSAWLMQSDGHYRRRRAGKTLRNAQLGLLAKFCS.

N45 lines the ATP pocket. Positions 375 and 405 each coordinate Mg(2+). H435 acts as the Phosphohistidine intermediate in catalysis. Positions 472, 568, and 596 each coordinate ATP.

The protein belongs to the polyphosphate kinase 1 (PPK1) family. Mg(2+) serves as cofactor. Post-translationally, an intermediate of this reaction is the autophosphorylated ppk in which a phosphate is covalently linked to a histidine residue through a N-P bond.

The enzyme catalyses [phosphate](n) + ATP = [phosphate](n+1) + ADP. Its function is as follows. Catalyzes the reversible transfer of the terminal phosphate of ATP to form a long-chain polyphosphate (polyP). This Burkholderia ambifaria (strain MC40-6) protein is Polyphosphate kinase.